The following is a 149-amino-acid chain: uncharacterized protein (149 aa).

Residues 1–11 are compositionally biased toward basic and acidic residues; it reads MTKESKPDRLR. The tract at residues 1–20 is disordered; it reads MTKESKPDRLRQMGALNPKP.

This is an uncharacterized protein from Sinorhizobium fredii (strain NBRC 101917 / NGR234).